The following is a 225-amino-acid chain: Uridylate kinase (225 aa).

Residue 9–10 (GS) coordinates ATP. Gly-44 lines the UMP pocket. The ATP site is built by Gly-45 and Arg-49. UMP contacts are provided by residues Asp-66 and 114-120 (THPGHTT). Thr-140, Asn-141, Tyr-146, and Asp-149 together coordinate ATP.

It belongs to the UMP kinase family. As to quaternary structure, homohexamer.

The protein resides in the cytoplasm. The catalysed reaction is UMP + ATP = UDP + ADP. Its pathway is pyrimidine metabolism; CTP biosynthesis via de novo pathway; UDP from UMP (UMPK route): step 1/1. Inhibited by UTP. Functionally, catalyzes the reversible phosphorylation of UMP to UDP. The polypeptide is Uridylate kinase (Thermococcus onnurineus (strain NA1)).